A 193-amino-acid chain; its full sequence is Xanthine phosphoribosyltransferase (193 aa).

Residues leucine 20 and asparagine 27 each coordinate xanthine. 129 to 133 (ANGKA) contacts 5-phospho-alpha-D-ribose 1-diphosphate. Residue lysine 157 coordinates xanthine.

It belongs to the purine/pyrimidine phosphoribosyltransferase family. Xpt subfamily. Homodimer.

The protein localises to the cytoplasm. It carries out the reaction XMP + diphosphate = xanthine + 5-phospho-alpha-D-ribose 1-diphosphate. It functions in the pathway purine metabolism; XMP biosynthesis via salvage pathway; XMP from xanthine: step 1/1. Converts the preformed base xanthine, a product of nucleic acid breakdown, to xanthosine 5'-monophosphate (XMP), so it can be reused for RNA or DNA synthesis. The protein is Xanthine phosphoribosyltransferase of Bifidobacterium adolescentis (strain ATCC 15703 / DSM 20083 / NCTC 11814 / E194a).